Reading from the N-terminus, the 337-residue chain is Vacuolar protein sorting-associated protein 26B-B (337 aa).

The disordered stretch occupies residues 313–337; that stretch reads RFEGTSHPETRPQHSGAAALEQEHE.

The protein belongs to the VPS26 family. Component of the heterotrimeric retromer cargo-selective complex (CSC) which is believed to associate with variable sorting nexins to form functionally distinct retromer complex variants.

Its subcellular location is the cytoplasm. It is found in the membrane. The protein resides in the endosome. Acts as a component of the retromer cargo-selective complex (CSC). The CSC is believed to be the core functional component of retromer or respective retromer complex variants acting to prevent missorting of selected transmembrane cargo proteins into the lysosomal degradation pathway. Retromer mediates retrograde transport of cargo proteins from endosomes to the trans-Golgi network (TGN). The chain is Vacuolar protein sorting-associated protein 26B-B (vps26b-b) from Xenopus laevis (African clawed frog).